The chain runs to 155 residues: UPF0178 protein RPC_3085 (155 aa).

This sequence belongs to the UPF0178 family.

The protein is UPF0178 protein RPC_3085 of Rhodopseudomonas palustris (strain BisB18).